Here is an 89-residue protein sequence, read N- to C-terminus: Small ribosomal subunit protein uS15 (89 aa).

It belongs to the universal ribosomal protein uS15 family. Part of the 30S ribosomal subunit. Forms a bridge to the 50S subunit in the 70S ribosome, contacting the 23S rRNA.

In terms of biological role, one of the primary rRNA binding proteins, it binds directly to 16S rRNA where it helps nucleate assembly of the platform of the 30S subunit by binding and bridging several RNA helices of the 16S rRNA. Its function is as follows. Forms an intersubunit bridge (bridge B4) with the 23S rRNA of the 50S subunit in the ribosome. The sequence is that of Small ribosomal subunit protein uS15 from Polynucleobacter asymbioticus (strain DSM 18221 / CIP 109841 / QLW-P1DMWA-1) (Polynucleobacter necessarius subsp. asymbioticus).